A 339-amino-acid polypeptide reads, in one-letter code: 3-isopropylmalate dehydrogenase (339 aa).

Substrate contacts are provided by R88, R98, R122, and D212. 3 residues coordinate Mg(2+): D212, D236, and D240. Position 272–284 (272–284) interacts with NAD(+); that stretch reads GSAPDIAGQGIAD.

The protein belongs to the isocitrate and isopropylmalate dehydrogenases family. LeuB type 2 subfamily. Homodimer. Mg(2+) serves as cofactor. The cofactor is Mn(2+).

It is found in the cytoplasm. It carries out the reaction (2R,3S)-3-isopropylmalate + NAD(+) = 4-methyl-2-oxopentanoate + CO2 + NADH. The protein operates within amino-acid biosynthesis; L-leucine biosynthesis; L-leucine from 3-methyl-2-oxobutanoate: step 3/4. Functionally, catalyzes the oxidation of 3-carboxy-2-hydroxy-4-methylpentanoate (3-isopropylmalate) to 3-carboxy-4-methyl-2-oxopentanoate. The product decarboxylates to 4-methyl-2 oxopentanoate. The polypeptide is 3-isopropylmalate dehydrogenase (Corynebacterium diphtheriae (strain ATCC 700971 / NCTC 13129 / Biotype gravis)).